Consider the following 67-residue polypeptide: Alpha-toxin Cn12 (67 aa).

Positions 1-66 constitute an LCN-type CS-alpha/beta domain; that stretch reads RDGYPLASNG…WGDSGTGPCR (66 aa). 4 cysteine pairs are disulfide-bonded: Cys-11-Cys-65, Cys-15-Cys-40, Cys-25-Cys-45, and Cys-29-Cys-47.

In terms of tissue distribution, expressed by the venom gland.

The protein resides in the secreted. Alpha toxins bind voltage-independently at site-3 of sodium channels (Nav) and inhibit the inactivation of the activated channels, thereby blocking neuronal transmission. This toxin binds, in vitro, to sodium channels and inhibits the inactivation of the activated channels. Seems not toxic to mice, crickets and sweet-water shrimps. The polypeptide is Alpha-toxin Cn12 (Centruroides noxius (Mexican scorpion)).